A 108-amino-acid polypeptide reads, in one-letter code: Ig kappa chain V-VI region NQ2-6.1 (108 aa).

The framework-1 stretch occupies residues 1–23 (QILLTQSPAIMSASPGQKVTMTC). A disulfide bridge links C23 with C87. A complementarity-determining-1 region spans residues 24 to 33 (SASSSVSYMY). The framework-2 stretch occupies residues 34 to 48 (WYQQKPGSSPRLLIY). The segment at 49 to 55 (DTSNLAS) is complementarity-determining-2. Positions 56-87 (GVPVRFSGSGSATSYSLTITRMQAEDAATYYC) are framework-3. The tract at residues 88–98 (QQWSSYPPMLT) is complementarity-determining-3. Positions 99-108 (FGAGTKLELK) are framework-4.

The protein is Ig kappa chain V-VI region NQ2-6.1 of Mus musculus (Mouse).